Reading from the N-terminus, the 298-residue chain is Tritrans,polycis-undecaprenyl-diphosphate synthase (geranylgeranyl-diphosphate specific) (298 aa).

D35 is a catalytic residue. Residue D35 coordinates Mg(2+). Residues 36 to 39, R48, H52, and 80 to 82 contribute to the substrate site; these read GNRR and STE. N83 (proton acceptor) is an active-site residue. Residues F84, R86, R208, and 214-216 each bind substrate; that span reads RIS.

The protein belongs to the UPP synthase family. As to quaternary structure, homodimer. Mg(2+) serves as cofactor.

The enzyme catalyses geranylgeranyl diphosphate + 7 isopentenyl diphosphate = tri-trans,hepta-cis-undecaprenyl diphosphate + 7 diphosphate. Its function is as follows. Catalyzes the sequential condensation of isopentenyl diphosphate (IPP) with geranylgeranyl diphosphate (GGPP) to yield (2Z,6Z,10Z,14Z,18Z,22Z,26Z,30E,34E,38E)-undecaprenyl diphosphate (tritrans,heptacis-UPP). It is probably the precursor of glycosyl carrier lipids. The polypeptide is Tritrans,polycis-undecaprenyl-diphosphate synthase (geranylgeranyl-diphosphate specific) (Methanosarcina mazei (strain ATCC BAA-159 / DSM 3647 / Goe1 / Go1 / JCM 11833 / OCM 88) (Methanosarcina frisia)).